We begin with the raw amino-acid sequence, 98 residues long: MALTKAEMSEYLFEKLGLSKRDAKEIVELFFEEVRRALENGEQVKLSGFGNFDLRDKNQRPGRNPKTGEDIPITARRVVTFRPGQKLKSRVENASPKE.

Positions 49 to 70 (FGNFDLRDKNQRPGRNPKTGED) are disordered.

It belongs to the bacterial histone-like protein family. As to quaternary structure, heterodimer of an alpha and a beta chain.

In terms of biological role, this protein is one of the two subunits of integration host factor, a specific DNA-binding protein that functions in genetic recombination as well as in transcriptional and translational control. This chain is Integration host factor subunit alpha, found in Sodalis glossinidius (strain morsitans).